The sequence spans 559 residues: 5'-AMP-activated protein kinase catalytic subunit alpha-1 (559 aa).

Positions 27–279 (YILGDTLGVG…IKDIREHEWF (253 aa)) constitute a Protein kinase domain. T32 is subject to Phosphothreonine. ATP contacts are provided by residues 33-41 (LGVGTFGKV) and K56. The Proton acceptor role is filled by D150. A Phosphothreonine; by LKB1 and CaMKK2 modification is found at T183. The AIS stretch occupies residues 302-381 (EALKEVCEKF…PERVPFLVAE (80 aa)). Residue T355 is modified to Phosphothreonine. Residue S356 is modified to Phosphoserine. S360 bears the Phosphoserine; by ULK1 mark. T368 bears the Phosphothreonine; by ULK1 mark. T382 carries the post-translational modification Phosphothreonine. S397 is modified (phosphoserine; by ULK1). Residues S467 and S486 each carry the phosphoserine modification. Polar residues predominate over residues 485–505 (KSGTATPQRSGSISNYRSCQR). Positions 485–536 (KSGTATPQRSGSISNYRSCQRSDSDAEAQGKPSDVSLTSSVTSLDSSPVDVA) are disordered. Position 488 is a phosphothreonine; by ULK1 (T488). The residue at position 490 (T490) is a Phosphothreonine. S496, S508, S524, and S527 each carry phosphoserine. The segment covering 516–535 (PSDVSLTSSVTSLDSSPVDV) has biased composition (low complexity).

The protein belongs to the protein kinase superfamily. CAMK Ser/Thr protein kinase family. SNF1 subfamily. As to quaternary structure, AMPK is a heterotrimer of an alpha catalytic subunit (PRKAA1 or PRKAA2), a beta (PRKAB1 or PRKAB2) and a gamma non-catalytic subunits (PRKAG1, PRKAG2 or PRKAG3). Interacts with FNIP1 and FNIP2. Mg(2+) is required as a cofactor. In terms of processing, phosphorylated at Thr-183 by STK11/LKB1 in complex with STE20-related adapter-alpha (STRADA) pseudo kinase and CAB39. Also phosphorylated at Thr-183 by CAMKK2; triggered by a rise in intracellular calcium ions, without detectable changes in the AMP/ATP ratio. CAMKK1 can also phosphorylate Thr-183, but at a much lower level. Dephosphorylated by protein phosphatase 2A and 2C (PP2A and PP2C). Phosphorylated by ULK1 and ULK2; leading to negatively regulate AMPK activity and suggesting the existence of a regulatory feedback loop between ULK1, ULK2 and AMPK. Dephosphorylated by PPM1A and PPM1B. Post-translationally, ubiquitinated. Glycosylated; O-GlcNAcylated by OGT, promoting the AMP-activated protein kinase (AMPK) activity.

It is found in the cytoplasm. The protein localises to the nucleus. It carries out the reaction L-seryl-[protein] + ATP = O-phospho-L-seryl-[protein] + ADP + H(+). The catalysed reaction is L-threonyl-[protein] + ATP = O-phospho-L-threonyl-[protein] + ADP + H(+). The enzyme catalyses L-seryl-[acetyl-CoA carboxylase] + ATP = O-phospho-L-seryl-[acetyl-CoA carboxylase] + ADP + H(+). It catalyses the reaction L-seryl-[3-hydroxy-3-methylglutaryl-coenzyme A reductase] + ATP = O-phospho-L-seryl-[3-hydroxy-3-methylglutaryl-coenzyme A reductase] + ADP + H(+). It carries out the reaction L-seryl-[tau protein] + ATP = O-phospho-L-seryl-[tau protein] + ADP + H(+). The catalysed reaction is L-threonyl-[tau protein] + ATP = O-phospho-L-threonyl-[tau protein] + ADP + H(+). Its activity is regulated as follows. Activated by phosphorylation on Thr-183. Binding of AMP to non-catalytic gamma subunit (PRKAG1, PRKAG2 or PRKAG3) results in allosteric activation, inducing phosphorylation on Thr-183. AMP-binding to gamma subunit also sustains activity by preventing dephosphorylation of Thr-183. ADP also stimulates Thr-183 phosphorylation, without stimulating already phosphorylated AMPK. ATP promotes dephosphorylation of Thr-183, rendering the enzyme inactive. Under physiological conditions AMPK mainly exists in its inactive form in complex with ATP, which is much more abundant than AMP. Selectively inhibited by compound C (6-[4-(2-Piperidin-1-yl-ethoxy)-phenyl)]-3-pyridin-4-yl-pyyrazolo[1,5-a] pyrimidine. Activated by resveratrol, a natural polyphenol present in red wine, and S17834, a synthetic polyphenol. Its function is as follows. Catalytic subunit of AMP-activated protein kinase (AMPK), an energy sensor protein kinase that plays a key role in regulating cellular energy metabolism. In response to reduction of intracellular ATP levels, AMPK activates energy-producing pathways and inhibits energy-consuming processes: inhibits protein, carbohydrate and lipid biosynthesis, as well as cell growth and proliferation. AMPK acts via direct phosphorylation of metabolic enzymes, and by longer-term effects via phosphorylation of transcription regulators. Regulates lipid synthesis by phosphorylating and inactivating lipid metabolic enzymes such as ACACA, ACACB, GYS1, HMGCR and LIPE; regulates fatty acid and cholesterol synthesis by phosphorylating acetyl-CoA carboxylase (ACACA and ACACB) and hormone-sensitive lipase (LIPE) enzymes, respectively. Promotes lipolysis of lipid droplets by mediating phosphorylation of isoform 1 of CHKA (CHKalpha2). Regulates insulin-signaling and glycolysis by phosphorylating IRS1, PFKFB2 and PFKFB3. AMPK stimulates glucose uptake in muscle by increasing the translocation of the glucose transporter SLC2A4/GLUT4 to the plasma membrane, possibly by mediating phosphorylation of TBC1D4/AS160. Regulates transcription and chromatin structure by phosphorylating transcription regulators involved in energy metabolism such as CRTC2/TORC2, FOXO3, histone H2B, HDAC5, MEF2C, MLXIPL/ChREBP, EP300, HNF4A, p53/TP53, SREBF1, SREBF2 and PPARGC1A. Acts as a key regulator of glucose homeostasis in liver by phosphorylating CRTC2/TORC2, leading to CRTC2/TORC2 sequestration in the cytoplasm. In response to stress, phosphorylates 'Ser-36' of histone H2B (H2BS36ph), leading to promote transcription. Acts as a key regulator of cell growth and proliferation by phosphorylating FNIP1, TSC2, RPTOR, WDR24 and ATG1/ULK1: in response to nutrient limitation, negatively regulates the mTORC1 complex by phosphorylating RPTOR component of the mTORC1 complex and by phosphorylating and activating TSC2. Also phosphorylates and inhibits GATOR2 subunit WDR24 in response to nutrient limitation, leading to suppress glucose-mediated mTORC1 activation. In response to energetic stress, phosphorylates FNIP1, inactivating the non-canonical mTORC1 signaling, thereby promoting nuclear translocation of TFEB and TFE3, and inducing transcription of lysosomal or autophagy genes. In response to nutrient limitation, promotes autophagy by phosphorylating and activating ATG1/ULK1. In that process, it also activates WDR45/WIPI4. Phosphorylates CASP6, thereby preventing its autoprocessing and subsequent activation. In response to nutrient limitation, phosphorylates transcription factor FOXO3 promoting FOXO3 mitochondrial import. Also acts as a regulator of cellular polarity by remodeling the actin cytoskeleton; probably by indirectly activating myosin. AMPK also acts as a regulator of circadian rhythm by mediating phosphorylation of CRY1, leading to destabilize it. May regulate the Wnt signaling pathway by phosphorylating CTNNB1, leading to stabilize it. Also has tau-protein kinase activity: in response to amyloid beta A4 protein (APP) exposure, activated by CAMKK2, leading to phosphorylation of MAPT/TAU; however the relevance of such data remains unclear in vivo. Also phosphorylates CFTR, EEF2K, KLC1, NOS3 and SLC12A1. Regulates hepatic lipogenesis. Activated via SIRT3, represses sterol regulatory element-binding protein (SREBP) transcriptional activities and ATP-consuming lipogenesis to restore cellular energy balance. Upon stress, regulates mitochondrial fragmentation through phosphorylation of MTFR1L. This Mus musculus (Mouse) protein is 5'-AMP-activated protein kinase catalytic subunit alpha-1 (Prkaa1).